The following is a 155-amino-acid chain: RNA pyrophosphohydrolase (155 aa).

The Nudix hydrolase domain occupies 5-147; that stretch reads RYRPNVAAIV…KRPVYKKVLE (143 aa). The short motif at 42–63 is the Nudix box element; sequence GGIDKGESPKEALLRELKEEIG.

This sequence belongs to the Nudix hydrolase family. RppH subfamily. A divalent metal cation is required as a cofactor.

Functionally, accelerates the degradation of transcripts by removing pyrophosphate from the 5'-end of triphosphorylated RNA, leading to a more labile monophosphorylated state that can stimulate subsequent ribonuclease cleavage. This is RNA pyrophosphohydrolase from Nitratiruptor sp. (strain SB155-2).